The primary structure comprises 360 residues: Phospho-N-acetylmuramoyl-pentapeptide-transferase (360 aa).

Helical transmembrane passes span 21–41 (YVTF…LWWG), 74–94 (MGGI…GDLG), 97–117 (YVWV…IDDY), 134–154 (YILQ…SADM), 168–188 (IMPQ…VGSS), 199–219 (GLAI…AYLS), 236–256 (AGEL…FLWF), 263–283 (VFMG…IAVL), 288–308 (ILLV…ILQV), and 338–358 (VIVR…ATLK).

This sequence belongs to the glycosyltransferase 4 family. MraY subfamily. Requires Mg(2+) as cofactor.

The protein localises to the cell inner membrane. The catalysed reaction is UDP-N-acetyl-alpha-D-muramoyl-L-alanyl-gamma-D-glutamyl-meso-2,6-diaminopimeloyl-D-alanyl-D-alanine + di-trans,octa-cis-undecaprenyl phosphate = di-trans,octa-cis-undecaprenyl diphospho-N-acetyl-alpha-D-muramoyl-L-alanyl-D-glutamyl-meso-2,6-diaminopimeloyl-D-alanyl-D-alanine + UMP. It functions in the pathway cell wall biogenesis; peptidoglycan biosynthesis. In terms of biological role, catalyzes the initial step of the lipid cycle reactions in the biosynthesis of the cell wall peptidoglycan: transfers peptidoglycan precursor phospho-MurNAc-pentapeptide from UDP-MurNAc-pentapeptide onto the lipid carrier undecaprenyl phosphate, yielding undecaprenyl-pyrophosphoryl-MurNAc-pentapeptide, known as lipid I. The sequence is that of Phospho-N-acetylmuramoyl-pentapeptide-transferase from Shewanella woodyi (strain ATCC 51908 / MS32).